A 188-amino-acid polypeptide reads, in one-letter code: Nicotinamide-nucleotide adenylyltransferase (188 aa).

It belongs to the archaeal NMN adenylyltransferase family.

It is found in the cytoplasm. It catalyses the reaction beta-nicotinamide D-ribonucleotide + ATP + H(+) = diphosphate + NAD(+). It participates in cofactor biosynthesis; NAD(+) biosynthesis; NAD(+) from nicotinamide D-ribonucleotide: step 1/1. The chain is Nicotinamide-nucleotide adenylyltransferase from Thermococcus kodakarensis (strain ATCC BAA-918 / JCM 12380 / KOD1) (Pyrococcus kodakaraensis (strain KOD1)).